Here is a 114-residue protein sequence, read N- to C-terminus: DNA-directed RNA polymerase subunit omega (114 aa).

It belongs to the RNA polymerase subunit omega family. In terms of assembly, the RNAP catalytic core consists of 2 alpha, 1 beta, 1 beta' and 1 omega subunit. When a sigma factor is associated with the core the holoenzyme is formed, which can initiate transcription.

It catalyses the reaction RNA(n) + a ribonucleoside 5'-triphosphate = RNA(n+1) + diphosphate. Functionally, promotes RNA polymerase assembly. Latches the N- and C-terminal regions of the beta' subunit thereby facilitating its interaction with the beta and alpha subunits. The chain is DNA-directed RNA polymerase subunit omega from Novosphingobium aromaticivorans (strain ATCC 700278 / DSM 12444 / CCUG 56034 / CIP 105152 / NBRC 16084 / F199).